Reading from the N-terminus, the 106-residue chain is Protein translocase subunit SecE (106 aa).

2 helical membrane-spanning segments follow: residues 20–40 (LPIR…LAAI) and 75–95 (IVIG…SIIV).

The protein belongs to the SecE/SEC61-gamma family. In terms of assembly, component of the Sec protein translocase complex. Heterotrimer consisting of SecY, SecE and SecG subunits. The heterotrimers can form oligomers, although 1 heterotrimer is thought to be able to translocate proteins. Interacts with the ribosome. Interacts with SecDF, and other proteins may be involved. Interacts with SecA.

It localises to the cell inner membrane. Essential subunit of the Sec protein translocation channel SecYEG. Clamps together the 2 halves of SecY. May contact the channel plug during translocation. In Haemophilus influenzae (strain ATCC 51907 / DSM 11121 / KW20 / Rd), this protein is Protein translocase subunit SecE.